Consider the following 288-residue polypeptide: Acetyl-coenzyme A carboxylase carboxyl transferase subunit beta (288 aa).

The region spanning Leu-34 to Ser-288 is the CoA carboxyltransferase N-terminal domain. Positions 38, 41, 56, and 59 each coordinate Zn(2+). A C4-type zinc finger spans residues Cys-38–Cys-59.

This sequence belongs to the AccD/PCCB family. In terms of assembly, acetyl-CoA carboxylase is a heterohexamer composed of biotin carboxyl carrier protein (AccB), biotin carboxylase (AccC) and two subunits each of ACCase subunit alpha (AccA) and ACCase subunit beta (AccD). Zn(2+) serves as cofactor.

The protein localises to the cytoplasm. It catalyses the reaction N(6)-carboxybiotinyl-L-lysyl-[protein] + acetyl-CoA = N(6)-biotinyl-L-lysyl-[protein] + malonyl-CoA. It functions in the pathway lipid metabolism; malonyl-CoA biosynthesis; malonyl-CoA from acetyl-CoA: step 1/1. In terms of biological role, component of the acetyl coenzyme A carboxylase (ACC) complex. Biotin carboxylase (BC) catalyzes the carboxylation of biotin on its carrier protein (BCCP) and then the CO(2) group is transferred by the transcarboxylase to acetyl-CoA to form malonyl-CoA. The chain is Acetyl-coenzyme A carboxylase carboxyl transferase subunit beta from Streptococcus equi subsp. equi (strain 4047).